The chain runs to 249 residues: tRNA (guanine-N(1)-)-methyltransferase (249 aa).

S-adenosyl-L-methionine contacts are provided by residues Gly-113 and 133–138 (IGDYVL).

This sequence belongs to the RNA methyltransferase TrmD family. As to quaternary structure, homodimer.

The protein localises to the cytoplasm. It catalyses the reaction guanosine(37) in tRNA + S-adenosyl-L-methionine = N(1)-methylguanosine(37) in tRNA + S-adenosyl-L-homocysteine + H(+). Specifically methylates guanosine-37 in various tRNAs. The polypeptide is tRNA (guanine-N(1)-)-methyltransferase (Aeromonas hydrophila subsp. hydrophila (strain ATCC 7966 / DSM 30187 / BCRC 13018 / CCUG 14551 / JCM 1027 / KCTC 2358 / NCIMB 9240 / NCTC 8049)).